A 456-amino-acid polypeptide reads, in one-letter code: Shootin-1 (456 aa).

The residue at position 1 (methionine 1) is an N-acetylmethionine. Serine 3 and serine 4 each carry phosphoserine. The stretch at 7–353 forms a coiled coil; that stretch reads EKQLQLITSL…RVNQSENSVP (347 aa). Residues serine 101 and serine 249 each carry the phosphoserine; by PAK1 modification. 2 disordered regions span residues 343-405 and 418-445; these read KRVN…VTDL and KKGVHLRPVNQTARPKTKPESSKGCESA. The span at 352 to 369 shows a compositional bias: pro residues; that stretch reads VPPPPPPPPPLPPPPPNP. Serine 375 is subject to Phosphoserine.

The protein belongs to the shootin family. Interacts with L1CAM; this interaction occurs in axonal growth cones. Interacts with actin filament retrograde flow; this interaction is enhanced in a netrin-1- and PAK1-dependent manner and promotes F-actin-substrate coupling and concomitant formation of traction forces at axonal growth cones. Interacts with RUFY3. Interacts with PFN2. Interacts (via N-terminus) with KIF20B; this interaction is direct and promotes the association of SHTN1 to microtubules in primary neurons. Associates with microtubule. In terms of processing, phosphorylated on Ser-101 and Ser-249 by PAK1 through a CDC42- and RAC1-dependent signaling pathway, which enhances its association with F-actin retrograde flow in filopodia and lamellipodia of axonal growth cones. Phosphorylation on Ser-101 and Ser-249 is increased by netrin-1.

The protein localises to the perikaryon. It is found in the cell projection. It localises to the axon. The protein resides in the growth cone. Its subcellular location is the cytoplasm. The protein localises to the cytoskeleton. It is found in the filopodium. It localises to the lamellipodium. Its function is as follows. Involved in the generation of internal asymmetric signals required for neuronal polarization and neurite outgrowth. Mediates netrin-1-induced F-actin-substrate coupling or 'clutch engagement' within the axon growth cone through activation of CDC42, RAC1 and PAK1-dependent signaling pathway, thereby converting the F-actin retrograde flow into traction forces, concomitantly with filopodium extension and axon outgrowth. Plays a role in cytoskeletal organization by regulating the subcellular localization of phosphoinositide 3-kinase (PI3K) activity at the axonal growth cone. Also plays a role in regenerative neurite outgrowth. In the developing cortex, cooperates with KIF20B to promote both the transition from the multipolar to the bipolar stage and the radial migration of cortical neurons from the ventricular zone toward the superficial layer of the neocortex. Involved in the accumulation of phosphatidylinositol 3,4,5-trisphosphate (PIP3) in the growth cone of primary hippocampal neurons. The sequence is that of Shootin-1 from Pongo abelii (Sumatran orangutan).